The following is a 160-amino-acid chain: Large ribosomal subunit protein uL16 (160 aa).

It belongs to the universal ribosomal protein uL16 family. In terms of assembly, part of the 50S ribosomal subunit.

Functionally, binds 23S rRNA and is also seen to make contacts with the A and possibly P site tRNAs. The polypeptide is Large ribosomal subunit protein uL16 (Prochlorococcus marinus (strain MIT 9515)).